The chain runs to 149 residues: MTSKIEQPRWASKDSAAGAASTPDEKIVLEFMDALTSNDAAKLIEYFAEDTMYQNMPLPPAYGRDAVEQTLAGLFTVMSIDAVETFHIGSSNGLVYTERVDVLRALPTGKSYNLSILGVFQLTEGKITGWRDYFDLREFEEAVDLPLRG.

Asp-101 functions as the Proton donor in the catalytic mechanism. Asp-132 serves as the catalytic Proton acceptor.

This sequence belongs to the limonene-1,2-epoxide hydrolase family. In terms of assembly, monomer.

It catalyses the reaction limonene 1,2-epoxide + H2O = limonene-1,2-diol. It functions in the pathway terpene metabolism; (4R)-limonene degradation; (1S,4R)-1-hydroxylimonen-2-one from (4R)-limonene: step 2/3. In terms of biological role, catalyzes the conversion of limonene-1,2-epoxide to limonene-1,2-diol. Can use both the (-) and (+) isomers of limonene-1,2-epoxide as substrates and also has some activity with 1-methylcyclohexene oxide, cyclohexene oxide and indene oxide as substrates. The polypeptide is Limonene-1,2-epoxide hydrolase (limA) (Rhodococcus erythropolis (Arthrobacter picolinophilus)).